We begin with the raw amino-acid sequence, 141 residues long: Nucleoside diphosphate kinase (141 aa).

6 residues coordinate ATP: Lys-11, Phe-59, Arg-87, Thr-93, Arg-104, and Asn-114. His-117 (pros-phosphohistidine intermediate) is an active-site residue.

This sequence belongs to the NDK family. As to quaternary structure, homotetramer. Requires Mg(2+) as cofactor.

The protein resides in the cytoplasm. It carries out the reaction a 2'-deoxyribonucleoside 5'-diphosphate + ATP = a 2'-deoxyribonucleoside 5'-triphosphate + ADP. The catalysed reaction is a ribonucleoside 5'-diphosphate + ATP = a ribonucleoside 5'-triphosphate + ADP. Major role in the synthesis of nucleoside triphosphates other than ATP. The ATP gamma phosphate is transferred to the NDP beta phosphate via a ping-pong mechanism, using a phosphorylated active-site intermediate. This chain is Nucleoside diphosphate kinase, found in Cupriavidus pinatubonensis (strain JMP 134 / LMG 1197) (Cupriavidus necator (strain JMP 134)).